The sequence spans 339 residues: Probable geranylgeranyl transferase type-2 subunit beta (339 aa).

PFTB repeat units follow at residues 24 to 65, 72 to 113, 120 to 161, 168 to 209, 216 to 257, and 264 to 306; these read IDKH…YLLK, KNEV…IQYD, INSV…SLLK, CEKA…SILN, IDKL…SAID, and NDKL…SLMG. Geranylgeranyl diphosphate contacts are provided by residues 194–196 and 236–248; these read HAG and RPEKSSDVCYSWW. Positions 242, 244, and 294 each coordinate Zn(2+).

The protein belongs to the protein prenyltransferase subunit beta family. Heterodimer of an alpha and a beta subunit. Zn(2+) is required as a cofactor.

It catalyses the reaction geranylgeranyl diphosphate + L-cysteinyl-[protein] = S-geranylgeranyl-L-cysteinyl-[protein] + diphosphate. Its function is as follows. Catalyzes the transfer of a geranyl-geranyl moiety from geranyl-geranyl pyrophosphate to both cysteines in Rab proteins with an -XXCC, -XCXC and -CCXX C-terminal. The chain is Probable geranylgeranyl transferase type-2 subunit beta (rabggtb) from Dictyostelium discoideum (Social amoeba).